Reading from the N-terminus, the 394-residue chain is NAD(P)H-quinone oxidoreductase subunit H (394 aa).

It belongs to the complex I 49 kDa subunit family. As to quaternary structure, NDH-1 can be composed of about 15 different subunits; different subcomplexes with different compositions have been identified which probably have different functions.

The protein resides in the cellular thylakoid membrane. It carries out the reaction a plastoquinone + NADH + (n+1) H(+)(in) = a plastoquinol + NAD(+) + n H(+)(out). The enzyme catalyses a plastoquinone + NADPH + (n+1) H(+)(in) = a plastoquinol + NADP(+) + n H(+)(out). In terms of biological role, NDH-1 shuttles electrons from an unknown electron donor, via FMN and iron-sulfur (Fe-S) centers, to quinones in the respiratory and/or the photosynthetic chain. The immediate electron acceptor for the enzyme in this species is believed to be plastoquinone. Couples the redox reaction to proton translocation, and thus conserves the redox energy in a proton gradient. Cyanobacterial NDH-1 also plays a role in inorganic carbon-concentration. The sequence is that of NAD(P)H-quinone oxidoreductase subunit H from Synechococcus sp. (strain JA-3-3Ab) (Cyanobacteria bacterium Yellowstone A-Prime).